A 323-amino-acid chain; its full sequence is tRNA-modifying protein YgfZ (323 aa).

Residues tryptophan 29 and tryptophan 182 each contribute to the folate site.

It belongs to the tRNA-modifying YgfZ family.

The protein resides in the cytoplasm. Folate-binding protein involved in regulating the level of ATP-DnaA and in the modification of some tRNAs. It is probably a key factor in regulatory networks that act via tRNA modification, such as initiation of chromosomal replication. The sequence is that of tRNA-modifying protein YgfZ from Vibrio atlanticus (strain LGP32) (Vibrio splendidus (strain Mel32)).